The chain runs to 404 residues: Phosphopentomutase (404 aa).

The Mn(2+) site is built by aspartate 10, aspartate 303, histidine 308, aspartate 344, histidine 345, and histidine 356.

It belongs to the phosphopentomutase family. Mn(2+) is required as a cofactor.

Its subcellular location is the cytoplasm. It catalyses the reaction 2-deoxy-alpha-D-ribose 1-phosphate = 2-deoxy-D-ribose 5-phosphate. It carries out the reaction alpha-D-ribose 1-phosphate = D-ribose 5-phosphate. The protein operates within carbohydrate degradation; 2-deoxy-D-ribose 1-phosphate degradation; D-glyceraldehyde 3-phosphate and acetaldehyde from 2-deoxy-alpha-D-ribose 1-phosphate: step 1/2. Isomerase that catalyzes the conversion of deoxy-ribose 1-phosphate (dRib-1-P) and ribose 1-phosphate (Rib-1-P) to deoxy-ribose 5-phosphate (dRib-5-P) and ribose 5-phosphate (Rib-5-P), respectively. This chain is Phosphopentomutase, found in Shewanella baltica (strain OS155 / ATCC BAA-1091).